We begin with the raw amino-acid sequence, 389 residues long: Adenylyltransferase and sulfurtransferase uba4 (389 aa).

Residues G40, D61, 68 to 72 (SNLHR), K85, and 129 to 130 (DT) each bind ATP. Residues C171 and C174 each contribute to the Zn(2+) site. C188 serves as the catalytic Glycyl thioester intermediate; for adenylyltransferase activity. Positions 252 and 255 each coordinate Zn(2+). The Rhodanese domain maps to 298–387 (AQRAPYLVDV…WSRQIDPNFP (90 aa)). The Cysteine persulfide intermediate role is filled by C347.

It in the N-terminal section; belongs to the HesA/MoeB/ThiF family. UBA4 subfamily. Zn(2+) serves as cofactor.

The protein resides in the cytoplasm. The protein localises to the cytosol. The catalysed reaction is [molybdopterin-synthase sulfur-carrier protein]-C-terminal Gly-Gly + ATP + H(+) = [molybdopterin-synthase sulfur-carrier protein]-C-terminal Gly-Gly-AMP + diphosphate. It catalyses the reaction [molybdopterin-synthase sulfur-carrier protein]-C-terminal Gly-Gly-AMP + S-sulfanyl-L-cysteinyl-[cysteine desulfurase] + AH2 = [molybdopterin-synthase sulfur-carrier protein]-C-terminal-Gly-aminoethanethioate + L-cysteinyl-[cysteine desulfurase] + A + AMP + 2 H(+). It participates in tRNA modification; 5-methoxycarbonylmethyl-2-thiouridine-tRNA biosynthesis. The protein operates within cofactor biosynthesis; molybdopterin biosynthesis. Functionally, plays a central role in 2-thiolation of mcm(5)S(2)U at tRNA wobble positions of cytosolic tRNA(Lys), tRNA(Glu) and tRNA(Gln). Also essential during biosynthesis of the molybdenum cofactor. Acts by mediating the C-terminal thiocarboxylation of sulfur carriers URM1 and CNX5/MOCS2A. Its N-terminus first activates urm1 and mocs2a as acyl-adenylates (-COAMP), then the persulfide sulfur on the catalytic cysteine is transferred to URM1 and CNX5/MOCS2A to form thiocarboxylation (-COSH) of their C-terminus. The reaction probably involves hydrogen sulfide that is generated from the persulfide intermediate and that acts as a nucleophile towards URM1 and CNX5/MOCS2A. Subsequently, a transient disulfide bond is formed. Does not use thiosulfate as sulfur donor; NFS1 probably acting as a sulfur donor for thiocarboxylation reactions. Required for growth on nitrate as a sole nitrogen source. The sequence is that of Adenylyltransferase and sulfurtransferase uba4 from Ogataea parapolymorpha (strain ATCC 26012 / BCRC 20466 / JCM 22074 / NRRL Y-7560 / DL-1) (Yeast).